We begin with the raw amino-acid sequence, 1108 residues long: Isoleucine--tRNA ligase (1108 aa).

The short motif at 53 to 63 (PFANGLPHYGH) is the 'HIGH' region element. The short motif at 654–658 (KLSKR) is the 'KMSKS' region element. Residue lysine 657 participates in ATP binding.

This sequence belongs to the class-I aminoacyl-tRNA synthetase family. IleS type 2 subfamily. As to quaternary structure, monomer. The cofactor is Zn(2+).

The protein localises to the cytoplasm. The catalysed reaction is tRNA(Ile) + L-isoleucine + ATP = L-isoleucyl-tRNA(Ile) + AMP + diphosphate. Functionally, catalyzes the attachment of isoleucine to tRNA(Ile). As IleRS can inadvertently accommodate and process structurally similar amino acids such as valine, to avoid such errors it has two additional distinct tRNA(Ile)-dependent editing activities. One activity is designated as 'pretransfer' editing and involves the hydrolysis of activated Val-AMP. The other activity is designated 'posttransfer' editing and involves deacylation of mischarged Val-tRNA(Ile). This is Isoleucine--tRNA ligase from Rickettsia bellii (strain RML369-C).